The chain runs to 426 residues: Dihydroorotase (426 aa).

2 residues coordinate Zn(2+): H58 and H60. Substrate-binding positions include 60–62 (HLR) and N92. Positions 150, 177, and 230 each coordinate Zn(2+). Residue N276 participates in substrate binding. D303 contributes to the Zn(2+) binding site. D303 is an active-site residue. H307 contributes to the substrate binding site.

The protein belongs to the metallo-dependent hydrolases superfamily. DHOase family. Class I DHOase subfamily. It depends on Zn(2+) as a cofactor.

It carries out the reaction (S)-dihydroorotate + H2O = N-carbamoyl-L-aspartate + H(+). The protein operates within pyrimidine metabolism; UMP biosynthesis via de novo pathway; (S)-dihydroorotate from bicarbonate: step 3/3. Catalyzes the reversible cyclization of carbamoyl aspartate to dihydroorotate. The protein is Dihydroorotase of Acetivibrio thermocellus (strain ATCC 27405 / DSM 1237 / JCM 9322 / NBRC 103400 / NCIMB 10682 / NRRL B-4536 / VPI 7372) (Clostridium thermocellum).